Consider the following 412-residue polypeptide: MKIYRVGGSVRDELLGLPVKDQDYVVVGATPEDMIRQGYRPVGKDFPVFLHPETHEQYALARTERKIARGYKGFAIYATPEVTLQEDLARRDLTINAIARDEAGNIIDPFGGIADLQAGILRHIGPAFVEDPVRVLRVARFAARFGFQVAPETFELMKEIVHTGETEALVAERVWQEIAHGLMEQHPSRMFHVLRECRALARILPEVDALFGVPQPAHAHPEIDTGIHVMMVIDYAASQQYPLEVRFAGLTHDLGKGTTPPDEWPRHIGHEARGVELVMDLCERIRVPRESRDLALLVARFHGDVHRALELRPSTIADMLQATDAYRKKVRFQAFLQACASDFHGRPGFADQPYPQAEHLSKALQAANSVDAGAIAMQLGQSHAGDTDLPMRIKRQVYAARVGRIKSLLSNP.

Glycine 8 and arginine 11 together coordinate ATP. CTP is bound by residues glycine 8 and arginine 11. Mg(2+) contacts are provided by aspartate 21 and aspartate 23. 3 residues coordinate ATP: arginine 91, arginine 137, and arginine 140. Positions 91, 137, and 140 each coordinate CTP. The region spanning 225-326 (TGIHVMMVID…ADMLQATDAY (102 aa)) is the HD domain.

It belongs to the tRNA nucleotidyltransferase/poly(A) polymerase family. Bacterial CCA-adding enzyme type 1 subfamily. Monomer. Can also form homodimers and oligomers. Mg(2+) serves as cofactor. It depends on Ni(2+) as a cofactor.

It catalyses the reaction a tRNA precursor + 2 CTP + ATP = a tRNA with a 3' CCA end + 3 diphosphate. It carries out the reaction a tRNA with a 3' CCA end + 2 CTP + ATP = a tRNA with a 3' CCACCA end + 3 diphosphate. In terms of biological role, catalyzes the addition and repair of the essential 3'-terminal CCA sequence in tRNAs without using a nucleic acid template. Adds these three nucleotides in the order of C, C, and A to the tRNA nucleotide-73, using CTP and ATP as substrates and producing inorganic pyrophosphate. tRNA 3'-terminal CCA addition is required both for tRNA processing and repair. Also involved in tRNA surveillance by mediating tandem CCA addition to generate a CCACCA at the 3' terminus of unstable tRNAs. While stable tRNAs receive only 3'-terminal CCA, unstable tRNAs are marked with CCACCA and rapidly degraded. The sequence is that of Multifunctional CCA protein from Nitrosomonas eutropha (strain DSM 101675 / C91 / Nm57).